A 490-amino-acid chain; its full sequence is Probable cytosol aminopeptidase (490 aa).

Mn(2+) is bound by residues K257 and D262. K269 is an active-site residue. Mn(2+) contacts are provided by D281, D341, and E343. R345 is a catalytic residue.

The protein belongs to the peptidase M17 family. Mn(2+) is required as a cofactor.

It localises to the cytoplasm. The enzyme catalyses Release of an N-terminal amino acid, Xaa-|-Yaa-, in which Xaa is preferably Leu, but may be other amino acids including Pro although not Arg or Lys, and Yaa may be Pro. Amino acid amides and methyl esters are also readily hydrolyzed, but rates on arylamides are exceedingly low.. The catalysed reaction is Release of an N-terminal amino acid, preferentially leucine, but not glutamic or aspartic acids.. Its function is as follows. Presumably involved in the processing and regular turnover of intracellular proteins. Catalyzes the removal of unsubstituted N-terminal amino acids from various peptides. The protein is Probable cytosol aminopeptidase of Prochlorococcus marinus (strain MIT 9215).